We begin with the raw amino-acid sequence, 227 residues long: Enolase-phosphatase E1 (227 aa).

The protein belongs to the HAD-like hydrolase superfamily. MasA/MtnC family. Monomer. The cofactor is Mg(2+).

The catalysed reaction is 5-methylsulfanyl-2,3-dioxopentyl phosphate + H2O = 1,2-dihydroxy-5-(methylsulfanyl)pent-1-en-3-one + phosphate. It participates in amino-acid biosynthesis; L-methionine biosynthesis via salvage pathway; L-methionine from S-methyl-5-thio-alpha-D-ribose 1-phosphate: step 3/6. Its pathway is amino-acid biosynthesis; L-methionine biosynthesis via salvage pathway; L-methionine from S-methyl-5-thio-alpha-D-ribose 1-phosphate: step 4/6. Functionally, bifunctional enzyme that catalyzes the enolization of 2,3-diketo-5-methylthiopentyl-1-phosphate (DK-MTP-1-P) into the intermediate 2-hydroxy-3-keto-5-methylthiopentenyl-1-phosphate (HK-MTPenyl-1-P), which is then dephosphorylated to form the acireductone 1,2-dihydroxy-3-keto-5-methylthiopentene (DHK-MTPene). In Pseudomonas syringae pv. tomato (strain ATCC BAA-871 / DC3000), this protein is Enolase-phosphatase E1.